A 498-amino-acid polypeptide reads, in one-letter code: ATP synthase subunit beta, chloroplastic (498 aa).

172–179 contacts ATP; it reads GGAGVGKT.

It belongs to the ATPase alpha/beta chains family. In terms of assembly, F-type ATPases have 2 components, CF(1) - the catalytic core - and CF(0) - the membrane proton channel. CF(1) has five subunits: alpha(3), beta(3), gamma(1), delta(1), epsilon(1). CF(0) has four main subunits: a(1), b(1), b'(1) and c(9-12).

The protein resides in the plastid. The protein localises to the chloroplast thylakoid membrane. The enzyme catalyses ATP + H2O + 4 H(+)(in) = ADP + phosphate + 5 H(+)(out). Functionally, produces ATP from ADP in the presence of a proton gradient across the membrane. The catalytic sites are hosted primarily by the beta subunits. The chain is ATP synthase subunit beta, chloroplastic from Hyophorbe lagenicaulis (Bottle palm).